The sequence spans 104 residues: MGGYKGIKADGGKVDQAKQLAAKTAKDIEACQKQTQQLAEYIEGSDWEGQFANKVKDVLLIMAKFQEELVQPMADHQKAIDNLSQNLAKYDTLSIKQGLDRVNP.

This sequence belongs to the WXG100 family. In terms of assembly, homodimer. When mixed with EsxA does not form heterodimers. Forms heterodimers with EsxD.

The protein resides in the secreted. Virulence factor that is important for the establishment of infection in the host. EsxB is required for EsxA synthesis as well as secretion. Mediates together with EsxA the release of S.aureus from the host cell. Also inhibits host cytokine production and thus modulates dendritic cell-mediated immunity. The sequence is that of Type VII secretion system extracellular protein B from Staphylococcus aureus (strain USA300).